Here is a 607-residue protein sequence, read N- to C-terminus: MCGIIGYSGSKANAVEVLLEGLEKVEYRGYDSAGIAFVTDSGIQIEKKEGKLENLKNHMKNFEVLSCTGIGHTRWATHGIPTDRNAHPHYSESKDVALIHNGIIENYVEIKKELLEQGVKFSSDTDTEVVAQLFSKLYDGDLYSTLKKVLKRIRGTYAFAIIHKDFPDKMICCRNHSPLIVGLGEHQNFIASDVSAILKYTRDIIYLEDGDVVLVTKDNVTVYDKDEKEVKREVKKVEWNFEQASKGGYAHFMIKEIEEQPEIIEKTLNVYTDKEKNVKFDEQLEGINFHDIDRIYIVACGTAYYAGLQGQYFMKKLLGIDVFTDIASEFRYNDPVITNKTLAIFVSQSGETIDTLMSMKYAKEKGARTLAISNVLGSTITREADNVIYTLAGPEISVASTKAYSSQVLVMYLLSLYMGAKLGKIEEKDYQKYISDISLLKENVVKLISEKEKIHDIAKKIKDIKNGFYLGRGIDEKVAREGSLKMKEINYIHTEALPAGELKHGSIALIEKGVLVVAISTNLEMDEKVVSNIKEVKARGAYVVGACKEGSLVPEVVDDVIQVKDSGELLTPVLTVVGLQYLAYYTSLEKGYDVDKPRNLAKSVTVE.

Cys2 (nucleophile; for GATase activity) is an active-site residue. The region spanning 2–218 (CGIIGYSGSK…DGDVVLVTKD (217 aa)) is the Glutamine amidotransferase type-2 domain. 2 consecutive SIS domains span residues 280-424 (FDEQ…KLGK) and 457-597 (IAKK…VDKP). Lys602 serves as the catalytic For Fru-6P isomerization activity.

Homodimer.

Its subcellular location is the cytoplasm. The enzyme catalyses D-fructose 6-phosphate + L-glutamine = D-glucosamine 6-phosphate + L-glutamate. Catalyzes the first step in hexosamine metabolism, converting fructose-6P into glucosamine-6P using glutamine as a nitrogen source. In Fusobacterium nucleatum subsp. nucleatum (strain ATCC 25586 / DSM 15643 / BCRC 10681 / CIP 101130 / JCM 8532 / KCTC 2640 / LMG 13131 / VPI 4355), this protein is Glutamine--fructose-6-phosphate aminotransferase [isomerizing].